A 373-amino-acid chain; its full sequence is 3-dehydroquinate synthase (373 aa).

NAD(+) contacts are provided by residues 67 to 72, 101 to 105, 125 to 126, lysine 138, and lysine 147; these read EGEETK, GVILD, and TT. 3 residues coordinate Zn(2+): glutamate 180, histidine 240, and histidine 256.

The protein belongs to the sugar phosphate cyclases superfamily. Dehydroquinate synthase family. The cofactor is NAD(+). Co(2+) is required as a cofactor. Zn(2+) serves as cofactor.

The protein localises to the cytoplasm. The catalysed reaction is 7-phospho-2-dehydro-3-deoxy-D-arabino-heptonate = 3-dehydroquinate + phosphate. It functions in the pathway metabolic intermediate biosynthesis; chorismate biosynthesis; chorismate from D-erythrose 4-phosphate and phosphoenolpyruvate: step 2/7. Its function is as follows. Catalyzes the conversion of 3-deoxy-D-arabino-heptulosonate 7-phosphate (DAHP) to dehydroquinate (DHQ). The chain is 3-dehydroquinate synthase from Chlamydia trachomatis serovar A (strain ATCC VR-571B / DSM 19440 / HAR-13).